Consider the following 622-residue polypeptide: Low affinity potassium transport system protein Kup (622 aa).

The next 12 membrane-spanning stretches (helical) occupy residues 12–32 (ITLA…LYTL), 49–69 (VFGF…LKYL), 101–121 (FLVI…VITP), 134–154 (IIAP…LTLL), 163–183 (GLVG…LAAL), 213–233 (VSFV…ALYA), 247–267 (WFTV…ALLL), 276–296 (PFFL…ATLA), 337–357 (IYIP…IVSF), 363–383 (LAAA…ILST), 395–415 (FLVA…FSAN), and 419–439 (IVSG…VMTT).

It belongs to the HAK/KUP transporter (TC 2.A.72) family.

It localises to the cell inner membrane. It carries out the reaction K(+)(in) + H(+)(in) = K(+)(out) + H(+)(out). Responsible for the low-affinity transport of potassium into the cell. Likely operates as a K(+):H(+) symporter. The chain is Low affinity potassium transport system protein Kup from Enterobacter sp. (strain 638).